A 146-amino-acid chain; its full sequence is Large ribosomal subunit protein uL13 (146 aa).

It belongs to the universal ribosomal protein uL13 family. As to quaternary structure, part of the 50S ribosomal subunit.

Functionally, this protein is one of the early assembly proteins of the 50S ribosomal subunit, although it is not seen to bind rRNA by itself. It is important during the early stages of 50S assembly. This is Large ribosomal subunit protein uL13 from Methylobacillus flagellatus (strain ATCC 51484 / DSM 6875 / VKM B-1610 / KT).